Here is a 445-residue protein sequence, read N- to C-terminus: UDP-N-acetylmuramoylalanine--D-glutamate ligase (445 aa).

Residue 118–124 coordinates ATP; the sequence is GTNGKTT.

This sequence belongs to the MurCDEF family.

The protein resides in the cytoplasm. It carries out the reaction UDP-N-acetyl-alpha-D-muramoyl-L-alanine + D-glutamate + ATP = UDP-N-acetyl-alpha-D-muramoyl-L-alanyl-D-glutamate + ADP + phosphate + H(+). The protein operates within cell wall biogenesis; peptidoglycan biosynthesis. Cell wall formation. Catalyzes the addition of glutamate to the nucleotide precursor UDP-N-acetylmuramoyl-L-alanine (UMA). The protein is UDP-N-acetylmuramoylalanine--D-glutamate ligase of Macrococcus caseolyticus (strain JCSC5402) (Macrococcoides caseolyticum).